The sequence spans 377 residues: F-box protein At2g05970 (377 aa).

The region spanning 8-55 is the F-box domain; it reads ASWSELCPDVLRCVFELLSFSDLNRTRSVCSSWHSASRHCVPTQNQIP.

The polypeptide is F-box protein At2g05970 (Arabidopsis thaliana (Mouse-ear cress)).